Consider the following 250-residue polypeptide: MPIRNIAVGTPQEATHPDTLKAGLAEFISTFIFVFAGSGSGIAYNKLTNDGAATPAGLISASIAHAFALFVAVSVGANISGGHVNPAVTFGAFVGGNITLLRGIVYIIAQLLGSIVASALLVFVTASSVPAFGLSEGVGVGPALVLEIVMTFGLVYTVYATAVDPKKGNIGIIAPIAIGFIVGANILVGGAFTGASMNPAVSFGPAVVSWSWSNHWVYWAGPLIGGGIAGLVYEVLFINSTHEQLPTTDY.

A run of 2 helical transmembrane segments spans residues 22–42 (AGLA…GSGI) and 56–76 (AGLI…VSVG). The NPA 1 signature appears at 85–87 (NPA). The next 3 helical transmembrane spans lie at 104–124 (IVYI…LVFV), 138–158 (VGVG…VYTV), and 170–190 (IGII…LVGG). The NPA 2 motif lies at 198–200 (NPA). A helical membrane pass occupies residues 218 to 238 (YWAGPLIGGGIAGLVYEVLFI).

It belongs to the MIP/aquaporin (TC 1.A.8) family. TIP (TC 1.A.8.10) subfamily.

The protein localises to the membrane. In terms of biological role, aquaporins facilitate the transport of water and small neutral solutes across cell membranes. May have a role in buffering osmotic fluctations in the highly compartmented vacuole of arbuscule cells. The protein is Probable aquaporin TIP-type (AQP1) of Medicago truncatula (Barrel medic).